An 86-amino-acid chain; its full sequence is MKKDIHPDYRPVVFLDTTTGYKFLSGSTKSTKETVEFEGETYPLIRVEISSDSHPFYTGRQKFTQADGRVDRFNKKYGLKDANTAQ.

This sequence belongs to the bacterial ribosomal protein bL31 family. Type B subfamily. Part of the 50S ribosomal subunit.

This chain is Large ribosomal subunit protein bL31B, found in Streptococcus agalactiae serotype Ia (strain ATCC 27591 / A909 / CDC SS700).